Here is a 499-residue protein sequence, read N- to C-terminus: MLPGWELTLCLLVSLGFHFRSFYEVYKVSREHEEELDQEFELEMDTLFGGLKKDPTDFEWNFWMEWGKRRLVWLFIGHMAVSQLATLLTKKHRPWIVMVYGMWACWCVLGAPGVVMVLLHSTIAFCVAQFRSVLLSWLCSLLLLSTLRLQSVEEVKRRWYKTENEYYLLQFTLTVRCLYYTSFSLELCRQPPSAQPTPSAQGASHSYPWLLTYVFYYPVFHNGPILNFPEFFRQMQQPELNSLQHSLCIVAKGLGRLLCWWWLAELMVHLMYMHALYSSAPLLESVSCWTLGGLALAQVLFFYVKYLVLFGVPALLMRLDGLTPPPLPRCVSTMFSFTGMWRYFDVGLHNFLIRYVYIPLGGSQHGLLGTLLSTATTFAFVSYWHGSYEDLWCWAALNWLGVTVESGVRRLLETPCVRETLARHLSPQAHHRLHALLAACSTSMLILFNLVFLGGIQVGKTYWNRIFLQGWPWVTLSVLGFLYCYSHVDIAWAQTYTVL.

At 1-5 the chain is on the cytoplasmic side; sequence MLPGW. Residues 6–22 form a helical membrane-spanning segment; sequence ELTLCLLVSLGFHFRSF. At 23 to 67 the chain is on the lumenal side; that stretch reads YEVYKVSREHEEELDQEFELEMDTLFGGLKKDPTDFEWNFWMEWG. Residues 68-84 form a helical membrane-spanning segment; it reads KRRLVWLFIGHMAVSQL. The Cytoplasmic portion of the chain corresponds to 85–94; that stretch reads ATLLTKKHRP. The essential for palmitoylation of SHH stretch occupies residues 91-155; sequence KHRPWIVMVY…TLRLQSVEEV (65 aa). Residues 95-119 lie within the membrane without spanning it; that stretch reads WIVMVYGMWACWCVLGAPGVVMVLL. Topologically, residues 120-131 are cytoplasmic; the sequence is HSTIAFCVAQFR. The helical transmembrane segment at 132–148 threads the bilayer; that stretch reads SVLLSWLCSLLLLSTLR. Topologically, residues 149 to 162 are lumenal; sequence LQSVEEVKRRWYKT. The chain crosses the membrane as a helical span at residues 163 to 183; the sequence is ENEYYLLQFTLTVRCLYYTSF. At 184–208 the chain is on the cytoplasmic side; that stretch reads SLELCRQPPSAQPTPSAQGASHSYP. A lipid anchor (S-palmitoyl cysteine) is attached at C188. The stretch at 209–223 is an intramembrane region; it reads WLLTYVFYYPVFHNG. Topologically, residues 224-249 are cytoplasmic; it reads PILNFPEFFRQMQQPELNSLQHSLCI. The S-palmitoyl cysteine moiety is linked to residue C248. The chain crosses the membrane as a helical span at residues 250 to 277; sequence VAKGLGRLLCWWWLAELMVHLMYMHALY. The Lumenal portion of the chain corresponds to 278 to 287; sequence SSAPLLESVS. Residues 288 to 316 form a helical membrane-spanning segment; the sequence is CWTLGGLALAQVLFFYVKYLVLFGVPALL. Topologically, residues 317–369 are cytoplasmic; sequence MRLDGLTPPPLPRCVSTMFSFTGMWRYFDVGLHNFLIRYVYIPLGGSQHGLLG. Residue C330 is the site of S-palmitoyl cysteine attachment. A helical transmembrane segment spans residues 370-386; sequence TLLSTATTFAFVSYWHG. Residue H385 is part of the active site. Residues 387–389 are Lumenal-facing; that stretch reads SYE. Residues 390-405 traverse the membrane as a helical segment; sequence DLWCWAALNWLGVTVE. Residues 406–433 lie on the Cytoplasmic side of the membrane; the sequence is SGVRRLLETPCVRETLARHLSPQAHHRL. Residue C416 is the site of S-palmitoyl cysteine attachment. Residues 434 to 454 traverse the membrane as a helical segment; sequence HALLAACSTSMLILFNLVFLG. 454–461 contacts GTP; it reads GGIQVGKT. At 455-468 the chain is on the lumenal side; the sequence is GIQVGKTYWNRIFL. Residues 469–487 form a helical membrane-spanning segment; that stretch reads QGWPWVTLSVLGFLYCYSH. At 488 to 499 the chain is on the cytoplasmic side; the sequence is VDIAWAQTYTVL.

Belongs to the membrane-bound acyltransferase family. HHAT subfamily.

It is found in the endoplasmic reticulum membrane. The protein localises to the golgi apparatus membrane. It carries out the reaction N-terminal L-cysteinyl-[protein] + hexadecanoyl-CoA = N-terminal N-hexadecanoyl-L-cysteinyl-[protein] + CoA + H(+). The enzyme catalyses N-terminal L-cysteinyl-[protein]-C-terminal glycyl cholesterol ester + hexadecanoyl-CoA = N-terminal N-hexadecanoyl-L-cysteinyl-[protein]-C-terminal glycyl cholesterol ester + CoA + H(+). Functionally, palmitoyl acyltransferase that catalyzes N-terminal palmitoylation of SHH; which is required for SHH signaling during limb development. It also catalyzes N-terminal palmitoylation of DHH. Promotes the transfer of palmitoyl-CoA from the cytoplasmic to the luminal side of the endoplasmic reticulum membrane, where SHH palmitoylation occurs. Plays a role in proper testis cord formation and the differentiation of Leydig cells. In Mus musculus (Mouse), this protein is Protein-cysteine N-palmitoyltransferase HHAT (Hhat).